We begin with the raw amino-acid sequence, 191 residues long: Penicillin-binding protein activator LpoB (191 aa).

A signal peptide spans 1–16; sequence MKRILFVILSTMLLAS. A lipid anchor (N-palmitoyl cysteine) is attached at C17. C17 carries the S-diacylglycerol cysteine lipid modification. Residues 25–48 are disordered; that stretch reads QPAPVTPVEPKEKQETTPIEPSEK.

The protein belongs to the LpoB family. As to quaternary structure, interacts with PBP1b.

The protein localises to the cell outer membrane. Regulator of peptidoglycan synthesis that is essential for the function of penicillin-binding protein 1B (PBP1b). The protein is Penicillin-binding protein activator LpoB of Xenorhabdus nematophila (strain ATCC 19061 / DSM 3370 / CCUG 14189 / LMG 1036 / NCIMB 9965 / AN6).